A 429-amino-acid chain; its full sequence is Adenylosuccinate synthetase (429 aa).

GTP contacts are provided by residues 12–18 (GDEGKGK) and 40–42 (GHT). Catalysis depends on aspartate 13, which acts as the Proton acceptor. Residues aspartate 13 and glycine 40 each contribute to the Mg(2+) site. Residues 13-16 (DEGK), 38-41 (NAGH), threonine 128, arginine 142, glutamine 223, threonine 238, and arginine 302 each bind IMP. The active-site Proton donor is the histidine 41. Position 298–304 (298–304 (TVTGRPR)) interacts with substrate. GTP contacts are provided by residues arginine 304, 330 to 332 (LLD), and 412 to 414 (SVG).

The protein belongs to the adenylosuccinate synthetase family. As to quaternary structure, homodimer. The cofactor is Mg(2+).

Its subcellular location is the cytoplasm. The catalysed reaction is IMP + L-aspartate + GTP = N(6)-(1,2-dicarboxyethyl)-AMP + GDP + phosphate + 2 H(+). Its pathway is purine metabolism; AMP biosynthesis via de novo pathway; AMP from IMP: step 1/2. Its function is as follows. Plays an important role in the de novo pathway of purine nucleotide biosynthesis. Catalyzes the first committed step in the biosynthesis of AMP from IMP. In Lactobacillus gasseri (strain ATCC 33323 / DSM 20243 / BCRC 14619 / CIP 102991 / JCM 1131 / KCTC 3163 / NCIMB 11718 / NCTC 13722 / AM63), this protein is Adenylosuccinate synthetase.